The following is a 55-amino-acid chain: uncharacterized protein (55 aa).

This is an uncharacterized protein from Homo sapiens (Human).